A 302-amino-acid chain; its full sequence is 33 kDa chaperonin (302 aa).

2 disulfides stabilise this stretch: cysteine 234–cysteine 236 and cysteine 267–cysteine 270.

It belongs to the HSP33 family. In terms of processing, under oxidizing conditions two disulfide bonds are formed involving the reactive cysteines. Under reducing conditions zinc is bound to the reactive cysteines and the protein is inactive.

It localises to the cytoplasm. Redox regulated molecular chaperone. Protects both thermally unfolding and oxidatively damaged proteins from irreversible aggregation. Plays an important role in the bacterial defense system toward oxidative stress. The polypeptide is 33 kDa chaperonin (Neisseria gonorrhoeae (strain ATCC 700825 / FA 1090)).